The sequence spans 150 residues: UPF0178 protein Reut_B5138 (150 aa).

This sequence belongs to the UPF0178 family.

In Cupriavidus pinatubonensis (strain JMP 134 / LMG 1197) (Cupriavidus necator (strain JMP 134)), this protein is UPF0178 protein Reut_B5138.